Reading from the N-terminus, the 382-residue chain is Mannitol-1-phosphate 5-dehydrogenase (382 aa).

NAD(+) is bound at residue Val-3–Gly-14.

It belongs to the mannitol dehydrogenase family.

The enzyme catalyses D-mannitol 1-phosphate + NAD(+) = beta-D-fructose 6-phosphate + NADH + H(+). In Sodalis glossinidius (strain morsitans), this protein is Mannitol-1-phosphate 5-dehydrogenase.